We begin with the raw amino-acid sequence, 102 residues long: Protein V2 (102 aa).

Functionally, may be involved in the regulation of ssDNA versus dsDNA levels. In Beet curly top virus (strain California/Logan) (BCTV), this protein is Protein V2.